A 91-amino-acid polypeptide reads, in one-letter code: Small ribosomal subunit protein bS16 (91 aa).

It belongs to the bacterial ribosomal protein bS16 family.

The polypeptide is Small ribosomal subunit protein bS16 (Staphylococcus aureus (strain Mu3 / ATCC 700698)).